Consider the following 74-residue polypeptide: Anionic peptide clone 10 (74 aa).

The signal sequence occupies residues 1–24 (MVSKSLIVLLLVSVLVSTFFTTEA).

The protein belongs to the non-disulfide-bridged peptide (NDBP) superfamily. Long chain multifunctional peptide (group 2) family. In terms of tissue distribution, expressed by the venom gland.

The protein localises to the secreted. Functionally, may be an antimicrobial peptide. The protein is Anionic peptide clone 10 of Tityus costatus (Brazilian scorpion).